A 387-amino-acid chain; its full sequence is F-box protein At5g41490 (387 aa).

The 46-residue stretch at 2–47 (ATMITNLRRDLIEEIISRVPLRSMKAVRLTCKSWNNISKSEIFTKM) folds into the F-box domain.

The polypeptide is F-box protein At5g41490 (Arabidopsis thaliana (Mouse-ear cress)).